Reading from the N-terminus, the 156-residue chain is Small ribosomal subunit protein uS7 (156 aa).

Belongs to the universal ribosomal protein uS7 family. Part of the 30S ribosomal subunit. Contacts proteins S9 and S11.

In terms of biological role, one of the primary rRNA binding proteins, it binds directly to 16S rRNA where it nucleates assembly of the head domain of the 30S subunit. Is located at the subunit interface close to the decoding center, probably blocks exit of the E-site tRNA. This Histophilus somni (strain 129Pt) (Haemophilus somnus) protein is Small ribosomal subunit protein uS7.